The sequence spans 1088 residues: Ran-binding protein 17 (1088 aa).

Ala-2 is modified (N-acetylalanine). Ser-569 is modified (phosphoserine).

The protein belongs to the exportin family. In terms of assembly, binds to nucleoporins and the GTP-bound form of Ran. In terms of tissue distribution, highly expressed in testis, moderately in pancreas and weakly in other tissues studied.

Its subcellular location is the cytoplasm. It is found in the nucleus. The protein resides in the nuclear pore complex. Functionally, may function as a nuclear transport receptor. The polypeptide is Ran-binding protein 17 (RANBP17) (Homo sapiens (Human)).